Consider the following 150-residue polypeptide: SsrA-binding protein (150 aa).

It belongs to the SmpB family.

Its subcellular location is the cytoplasm. Its function is as follows. Required for rescue of stalled ribosomes mediated by trans-translation. Binds to transfer-messenger RNA (tmRNA), required for stable association of tmRNA with ribosomes. tmRNA and SmpB together mimic tRNA shape, replacing the anticodon stem-loop with SmpB. tmRNA is encoded by the ssrA gene; the 2 termini fold to resemble tRNA(Ala) and it encodes a 'tag peptide', a short internal open reading frame. During trans-translation Ala-aminoacylated tmRNA acts like a tRNA, entering the A-site of stalled ribosomes, displacing the stalled mRNA. The ribosome then switches to translate the ORF on the tmRNA; the nascent peptide is terminated with the 'tag peptide' encoded by the tmRNA and targeted for degradation. The ribosome is freed to recommence translation, which seems to be the essential function of trans-translation. This is SsrA-binding protein from Polynucleobacter asymbioticus (strain DSM 18221 / CIP 109841 / QLW-P1DMWA-1) (Polynucleobacter necessarius subsp. asymbioticus).